Here is a 271-residue protein sequence, read N- to C-terminus: ATP synthase subunit a (271 aa).

The next 5 helical transmembrane spans lie at 38 to 58 (FWTL…LFLL), 100 to 120 (LIAP…LMDL), 146 to 166 (DVNI…FYSI), 220 to 240 (LIFI…LNVP), and 242 to 262 (AIFH…LTIV).

It belongs to the ATPase A chain family. In terms of assembly, F-type ATPases have 2 components, CF(1) - the catalytic core - and CF(0) - the membrane proton channel. CF(1) has five subunits: alpha(3), beta(3), gamma(1), delta(1), epsilon(1). CF(0) has three main subunits: a(1), b(2) and c(9-12). The alpha and beta chains form an alternating ring which encloses part of the gamma chain. CF(1) is attached to CF(0) by a central stalk formed by the gamma and epsilon chains, while a peripheral stalk is formed by the delta and b chains.

The protein resides in the cell inner membrane. Key component of the proton channel; it plays a direct role in the translocation of protons across the membrane. The sequence is that of ATP synthase subunit a from Citrobacter koseri (strain ATCC BAA-895 / CDC 4225-83 / SGSC4696).